A 592-amino-acid polypeptide reads, in one-letter code: Glutamine-rich protein 2 (592 aa).

The disordered stretch occupies residues 488–592 (QLQQAQHARP…TRGPRSTAAH (105 aa)). Residues 544 to 567 (LQSNVSHSSIPTDIASLQGSQQGL) show a composition bias toward polar residues.

Interacts with AKAP3, ODF2 and TSSK4. Interacts with AKAP4. As to expression, expressed in testis. Not detected in heart, brain, kidney, stomach, ovary, liver, lung and uterus.

The protein resides in the nucleus membrane. It localises to the nucleus. It is found in the cytoplasm. Its subcellular location is the cell projection. The protein localises to the cilium. The protein resides in the flagellum. Its function is as follows. Has an essential role in the formation of sperm flagella and flagellar structure maintainance. It acts as a suppressor of ubiquitination and degradation of proteins involved in flagellar development and motility. The chain is Glutamine-rich protein 2 from Mus musculus (Mouse).